The following is a 360-amino-acid chain: Photosystem II protein D1 (360 aa).

Transmembrane regions (helical) follow at residues 29-46, 118-133, and 142-156; these read YIGW…TATT, HFLL…EWEF, and WISV…AASA. His118 contributes to the chlorophyll a binding site. Trp126 lines the pheophytin a pocket. [CaMn4O5] cluster contacts are provided by Asp170 and Glu189. A helical transmembrane segment spans residues 197–218; sequence FHQLGVAGVFGGSLFSAMHGSL. A chlorophyll a-binding site is contributed by His198. A quinone-binding positions include His215 and 264–265; that span reads SF. Fe cation is bound at residue His215. Position 272 (His272) interacts with Fe cation. The chain crosses the membrane as a helical span at residues 274-288; it reads FLGLWPVVGIWFTAL. The [CaMn4O5] cluster site is built by His332, Glu333, Asp342, and Ala344. Positions 345–360 are excised as a propeptide; sequence SGESLPVALTAPAVIG.

It belongs to the reaction center PufL/M/PsbA/D family. As to quaternary structure, PSII is composed of 1 copy each of membrane proteins PsbA, PsbB, PsbC, PsbD, PsbE, PsbF, PsbH, PsbI, PsbJ, PsbK, PsbL, PsbM, PsbT, PsbX, PsbY, PsbZ, Psb30/Ycf12, at least 3 peripheral proteins of the oxygen-evolving complex and a large number of cofactors. It forms dimeric complexes. The D1/D2 heterodimer binds P680, chlorophylls that are the primary electron donor of PSII, and subsequent electron acceptors. It shares a non-heme iron and each subunit binds pheophytin, quinone, additional chlorophylls, carotenoids and lipids. D1 provides most of the ligands for the Mn4-Ca-O5 cluster of the oxygen-evolving complex (OEC). There is also a Cl(-1) ion associated with D1 and D2, which is required for oxygen evolution. The PSII complex binds additional chlorophylls, carotenoids and specific lipids. serves as cofactor. Post-translationally, tyr-161 forms a radical intermediate that is referred to as redox-active TyrZ, YZ or Y-Z. In terms of processing, C-terminally processed by CTPA; processing is essential to allow assembly of the oxygen-evolving complex and thus photosynthetic growth.

It localises to the plastid. The protein localises to the chloroplast thylakoid membrane. It catalyses the reaction 2 a plastoquinone + 4 hnu + 2 H2O = 2 a plastoquinol + O2. Its function is as follows. Photosystem II (PSII) is a light-driven water:plastoquinone oxidoreductase that uses light energy to abstract electrons from H(2)O, generating O(2) and a proton gradient subsequently used for ATP formation. It consists of a core antenna complex that captures photons, and an electron transfer chain that converts photonic excitation into a charge separation. The D1/D2 (PsbA/PsbD) reaction center heterodimer binds P680, the primary electron donor of PSII as well as several subsequent electron acceptors. In Guillardia theta (Cryptophyte), this protein is Photosystem II protein D1.